Consider the following 51-residue polypeptide: Large ribosomal subunit protein bL33 (51 aa).

It belongs to the bacterial ribosomal protein bL33 family.

The polypeptide is Large ribosomal subunit protein bL33 (Ruthia magnifica subsp. Calyptogena magnifica).